Here is a 328-residue protein sequence, read N- to C-terminus: Versiconal hemiacetal acetate esterase (328 aa).

The Involved in the stabilization of the negatively charged intermediate by the formation of the oxyanion hole signature appears at 82 to 84 (HGG). Residues Ser156, Asp260, and His290 contribute to the active site.

The protein belongs to the 'GDXG' lipolytic enzyme family.

The catalysed reaction is (2S,3S)-versiconal hemiacetal acetate + H2O = (2S-3S)-versiconal hemiacetal + acetate + H(+). It carries out the reaction (3S)-versiconol acetate + H2O = (S)-versiconol + acetate + H(+). The protein operates within mycotoxin biosynthesis. Functionally, versiconal hemiacetal acetate esterase; part of the fragmented gene cluster that mediates the biosynthesis of dothistromin (DOTH), a polyketide toxin very similar in structure to the aflatoxin precursor, versicolorin B. The first step of the pathway is the conversion of acetate to norsolorinic acid (NOR) and requires the fatty acid synthase subunits hexA and hexB, as well as the polyketide synthase pksA. PksA combines a hexanoyl starter unit and 7 malonyl-CoA extender units to synthesize the precursor NOR. The hexanoyl starter unit is provided to the acyl-carrier protein (ACP) domain by the fungal fatty acid synthase hexA/hexB. The second step is the conversion of NOR to averantin (AVN) and requires the norsolorinic acid ketoreductase nor1, which catalyzes the dehydration of norsolorinic acid to form (1'S)-averantin. The cytochrome P450 monooxygenase avnA then catalyzes the hydroxylation of AVN to 5'hydroxyaverantin (HAVN). The next step is performed by adhA that transforms HAVN to averufin (AVF). Averufin might then be converted to hydroxyversicolorone by cypX and avfA. Hydroxyversicolorone is further converted versiconal hemiacetal acetate (VHA) by moxY. VHA is then the substrate for the versiconal hemiacetal acetate esterase est1 to yield versiconal (VAL). Versicolorin B synthase vbsA then converts VAL to versicolorin B (VERB) by closing the bisfuran ring. Then, the activity of the versicolorin B desaturase verB leads to versicolorin A (VERA). DotB, a predicted chloroperoxidase, may perform epoxidation of the A-ring of VERA. Alternatively, a cytochrome P450, such as cypX or avnA could catalyze this step. It is also possible that another, uncharacterized, cytochrome P450 enzyme is responsible for this step. Opening of the epoxide could potentially be achieved by the epoxide hydrolase epoA. However, epoA seems not to be required for DOTH biosynthesis, but other epoxide hydrolases may have the ability to complement this hydrolysis. Alternatively, opening of the epoxide ring could be achieved non-enzymatically. The next step is the deoxygenation of ring A to yield the 5,8-dihydroxyanthraquinone which is most likely catalyzed by the NADPH dehydrogenase encoded by ver1. The last stages of DOTH biosynthesis are proposed to involve hydroxylation of the bisfuran. OrdB and norB might have oxidative roles here. An alternative possibility is that cytochrome P450 monoogenases such as avnA and cypX might perform these steps in addition to previously proposed steps. In Dothistroma septosporum (strain NZE10 / CBS 128990) (Red band needle blight fungus), this protein is Versiconal hemiacetal acetate esterase.